A 572-amino-acid chain; its full sequence is Methionine--tRNA ligase (572 aa).

Positions 11-21 match the 'HIGH' region motif; that stretch reads PYINGIKHLGN. Positions 143, 146, 156, and 159 each coordinate Zn(2+). The 'KMSKS' region motif lies at 346–350; it reads QFSTS. Threonine 349 serves as a coordination point for ATP.

The protein belongs to the class-I aminoacyl-tRNA synthetase family. MetG type 1 subfamily. As to quaternary structure, monomer. Requires Zn(2+) as cofactor.

It is found in the cytoplasm. It carries out the reaction tRNA(Met) + L-methionine + ATP = L-methionyl-tRNA(Met) + AMP + diphosphate. Its function is as follows. Is required not only for elongation of protein synthesis but also for the initiation of all mRNA translation through initiator tRNA(fMet) aminoacylation. This Ruegeria pomeroyi (strain ATCC 700808 / DSM 15171 / DSS-3) (Silicibacter pomeroyi) protein is Methionine--tRNA ligase.